A 110-amino-acid chain; its full sequence is Small ribosomal subunit protein bS6 (110 aa).

This sequence belongs to the bacterial ribosomal protein bS6 family.

Its function is as follows. Binds together with bS18 to 16S ribosomal RNA. The polypeptide is Small ribosomal subunit protein bS6 (rpsF) (Aquifex aeolicus (strain VF5)).